Consider the following 361-residue polypeptide: Chorismate synthase (361 aa).

Residues arginine 48 and arginine 54 each coordinate NADP(+). FMN-binding positions include arginine 125–serine 127, asparagine 238–alanine 239, glycine 278, lysine 293–serine 297, and arginine 319.

Belongs to the chorismate synthase family. As to quaternary structure, homotetramer. FMNH2 is required as a cofactor.

It catalyses the reaction 5-O-(1-carboxyvinyl)-3-phosphoshikimate = chorismate + phosphate. Its pathway is metabolic intermediate biosynthesis; chorismate biosynthesis; chorismate from D-erythrose 4-phosphate and phosphoenolpyruvate: step 7/7. In terms of biological role, catalyzes the anti-1,4-elimination of the C-3 phosphate and the C-6 proR hydrogen from 5-enolpyruvylshikimate-3-phosphate (EPSP) to yield chorismate, which is the branch point compound that serves as the starting substrate for the three terminal pathways of aromatic amino acid biosynthesis. This reaction introduces a second double bond into the aromatic ring system. This chain is Chorismate synthase, found in Pectobacterium atrosepticum (strain SCRI 1043 / ATCC BAA-672) (Erwinia carotovora subsp. atroseptica).